The chain runs to 408 residues: 3-phosphoshikimate 1-carboxyvinyltransferase (408 aa).

Residues Lys20, Ser21, and Arg25 each coordinate 3-phosphoshikimate. Lys20 lines the phosphoenolpyruvate pocket. Arg111 lines the phosphoenolpyruvate pocket. 3-phosphoshikimate is bound by residues Ser151, Ser152, Gln153, Ser178, Asp293, and Lys320. Residue Gln153 participates in phosphoenolpyruvate binding. Asp293 (proton acceptor) is an active-site residue. The phosphoenolpyruvate site is built by Arg324, Arg365, and Lys389.

This sequence belongs to the EPSP synthase family. As to quaternary structure, monomer.

It localises to the cytoplasm. It catalyses the reaction 3-phosphoshikimate + phosphoenolpyruvate = 5-O-(1-carboxyvinyl)-3-phosphoshikimate + phosphate. The protein operates within metabolic intermediate biosynthesis; chorismate biosynthesis. In terms of biological role, catalyzes the transfer of the enolpyruvyl moiety of phosphoenolpyruvate (PEP) to the 5-hydroxyl of shikimate-3-phosphate (S3P) to produce enolpyruvyl shikimate-3-phosphate and inorganic phosphate. The chain is 3-phosphoshikimate 1-carboxyvinyltransferase from Sulfurisphaera tokodaii (strain DSM 16993 / JCM 10545 / NBRC 100140 / 7) (Sulfolobus tokodaii).